A 423-amino-acid polypeptide reads, in one-letter code: vacuole-related protein 17 (423 aa).

Ala2 carries the N-acetylalanine modification. The interval 109–134 is disordered; that stretch reads ATVPNEAPNDSPQSQSTRSSLGSFQP. Residues 110–170 are MYO2-binding; that stretch reads TVPNEAPNDS…NPINEVDCPS (61 aa). Polar residues predominate over residues 116–131; sequence PNDSPQSQSTRSSLGS. Residue Ser119 is modified to Phosphoserine. The residue at position 149 (Thr149) is a Phosphothreonine. The tract at residues 150 to 211 is disordered; the sequence is PSKPPKKSVG…SKKPSSSDTY (62 aa). A Phosphoserine modification is found at Ser178. The segment covering 182 to 192 has biased composition (basic residues); it reads QPARNRTLRAA. Positions 199 to 211 are enriched in polar residues; sequence LNKSKKPSSSDTY. Thr248 is modified (phosphothreonine). Ser269 is subject to Phosphoserine. Residues 290 to 380 are VAC8-binding; that stretch reads SASFFRPSNP…ISESFQSKRG (91 aa).

It belongs to the VAC17 family. In terms of assembly, interacts with MYO2 and VAC8. Interacts with ATG18.

The protein localises to the vacuole membrane. In terms of biological role, vacuole-specific MYO2 receptor required for vacuole inheritance. Binds simultaneously to MYO2 and to VAC8, a vacuolar membrane protein, forming a transport complex which moves the attached vacuole membrane along actin cables into the bud. Once the vacuole arrives in the bud, VAC17 is degraded, depositing the vacuole in its correct location. The chain is vacuole-related protein 17 (VAC17) from Saccharomyces cerevisiae (strain ATCC 204508 / S288c) (Baker's yeast).